Here is a 272-residue protein sequence, read N- to C-terminus: Insulin-like growth factor-binding protein 5 (272 aa).

The N-terminal stretch at 1–20 (MVLLTAVLLLLAAYAGPAQS) is a signal peptide. The 81-residue stretch at 23–103 (SFVHCEPCDE…LHGRGVCLNE (81 aa)) folds into the IGFBP N-terminal domain. Disulfide bonds link cysteine 27–cysteine 53, cysteine 30–cysteine 55, cysteine 38–cysteine 56, cysteine 45–cysteine 59, cysteine 67–cysteine 80, and cysteine 74–cysteine 100. The span at 111-122 (KIERDSREHEEP) shows a compositional bias: basic and acidic residues. The segment at 111 to 130 (KIERDSREHEEPTTSEMAEE) is disordered. Position 116 is a phosphoserine; by FAM20C (serine 116). Threonine 172 carries O-linked (HexNAc...) threonine glycosylation. The Thyroglobulin type-1 domain occupies 189–263 (QGPCRRHMEA…MEYVDGDFQC (75 aa)). 3 disulfides stabilise this stretch: cysteine 192–cysteine 219, cysteine 230–cysteine 241, and cysteine 243–cysteine 263.

As to quaternary structure, interacts with IGF1; this interaction enhances the growth stimulatory effects of IGF1 on fibroblasts. Interacts with CAV1; this interaction allows trafficking of IGFBP5 from the plasma membrane to the nucleus. Interacts with NCL; this interaction is necessary for IGFBP5 localization to the nucleus. Post-translationally, cleaved by C1S in extracellular space. In terms of tissue distribution, osteosarcoma, and at lower levels in liver, kidney and brain.

Its subcellular location is the secreted. The protein localises to the cytoplasm. It localises to the nucleus. In terms of biological role, multifunctional protein that plays a critical role in regulating the availability of IGFs to their receptors and thereby regulates IGF-mediated cellular processes including proliferation, differentiation, and apoptosis in a cell-type specific manner. Increases the cell proliferation of osteoblasts, intestinal smooth muscle cells and neuroblastoma cells. Enhances adhesion and survival of epithelial cells but decreases adhesion of mesenchymal cells. Once secreted, acts as a major mediator of mTORC1-dependent feedback inhibition of IGF1 signaling. Also plays a role in the induction of extracellular matrix (ECM) production and deposition independently of its nuclear translocation and binding to IGFs. Acts itself as a growth factor that can act independently of IGFs to regulate bone formation. Acts as a ligand for the ROR1 receptor which triggers formation of ROR1/HER2 heterodimer to enhance CREB oncogenic signaling. The polypeptide is Insulin-like growth factor-binding protein 5 (IGFBP5) (Homo sapiens (Human)).